The sequence spans 270 residues: L-aspartate dehydrogenase (270 aa).

2 residues coordinate NAD(+): Ala-123 and Asn-191. The active site involves His-221.

It belongs to the L-aspartate dehydrogenase family.

It carries out the reaction L-aspartate + NADP(+) + H2O = oxaloacetate + NH4(+) + NADPH + H(+). The catalysed reaction is L-aspartate + NAD(+) + H2O = oxaloacetate + NH4(+) + NADH + H(+). Its pathway is cofactor biosynthesis; NAD(+) biosynthesis; iminoaspartate from L-aspartate (dehydrogenase route): step 1/1. In terms of biological role, specifically catalyzes the NAD or NADP-dependent dehydrogenation of L-aspartate to iminoaspartate. The polypeptide is L-aspartate dehydrogenase (Methanocella arvoryzae (strain DSM 22066 / NBRC 105507 / MRE50)).